We begin with the raw amino-acid sequence, 583 residues long: Probable lysosomal cobalamin transporter (583 aa).

Transmembrane regions (helical) follow at residues 8–28 (LIWA…SVFI), 41–61 (VILT…LVPV), 95–115 (IVYY…IPFI), 145–165 (TVSF…VPVA), 188–208 (ALTF…VLYT), 312–332 (LLSG…MLLT), 347–367 (GYIL…VQSA), 375–395 (VIFT…ISAV), 418–438 (LLAT…TSMI), and 506–526 (FFGA…LLVM). Residues 541-552 (LDEDAEEAEEES) show a composition bias toward acidic residues. Residues 541-562 (LDEDAEEAEEESLLANTRGRAE) form a disordered region.

This sequence belongs to the LIMR family. LMBRD1 subfamily.

It localises to the lysosome membrane. Probable lysosomal cobalamin transporter. Required to export cobalamin from lysosomes allowing its conversion to cofactors. The sequence is that of Probable lysosomal cobalamin transporter from Aspergillus oryzae (strain ATCC 42149 / RIB 40) (Yellow koji mold).